The primary structure comprises 125 residues: 17 kDa gas vesicle protein (125 aa).

The protein belongs to the gas vesicle GvpC family.

The protein localises to the gas vesicle. Gas vesicles (GV) are hollow, gas filled proteinaceous nanostructures. During planktonic growth they allow positioning of the organism at a favorable depth for light or nutrient acquisition. In Dactylococcopsis salina (strain PCC 8305) (Myxobactron salinum), this protein is 17 kDa gas vesicle protein.